The sequence spans 537 residues: Protein ST7 homolog (537 aa).

A helical membrane pass occupies residues 15-35; the sequence is FYVALTGTSSLISGLILIFEW. The tract at residues 61–111 is disordered; sequence SDGQSESSNGSGSSSSSGSSSSSNGGAGGGGSGGAGASGSGSATTSTGTQM. Over residues 67–84 the composition is skewed to low complexity; it reads SSNGSGSSSSSGSSSSSN. Positions 85–99 are enriched in gly residues; sequence GGAGGGGSGGAGASG. The span at 100–109 shows a compositional bias: low complexity; the sequence is SGSATTSTGT. Residues 472 to 492 form a helical membrane-spanning segment; the sequence is LPFFILFTAGLCSITALLALA.

The protein belongs to the ST7 family.

It localises to the membrane. This chain is Protein ST7 homolog, found in Drosophila melanogaster (Fruit fly).